The sequence spans 618 residues: Probable N-acetylgalactosaminyltransferase 6 (618 aa).

At methionine 1–valine 16 the chain is on the cytoplasmic side. A helical; Signal-anchor for type II membrane protein transmembrane segment spans residues valine 17 to leucine 39. Residues serine 40–proline 618 lie on the Lumenal side of the membrane. Residues asparagine 81 and asparagine 149 are each glycosylated (N-linked (GlcNAc...) asparagine). 2 disulfides stabilise this stretch: cysteine 147-cysteine 381 and cysteine 372-cysteine 452. A catalytic subdomain A region spans residues leucine 156–arginine 267. Residues aspartate 197 and arginine 228 each contribute to the substrate site. Aspartate 251 contacts Mn(2+). Residue serine 252 coordinates substrate. Histidine 253 is a Mn(2+) binding site. Residues proline 327–arginine 389 form a catalytic subdomain B region. Residue tryptophan 358 participates in substrate binding. Histidine 386 is a binding site for Mn(2+). Arginine 389 provides a ligand contact to substrate. The 136-residue stretch at arginine 474 to threonine 609 folds into the Ricin B-type lectin domain. Asparagine 483 carries an N-linked (GlcNAc...) asparagine glycan. 3 disulfides stabilise this stretch: cysteine 487/cysteine 505, cysteine 530/cysteine 550, and cysteine 575/cysteine 597. A glycan (N-linked (GlcNAc...) asparagine) is linked at asparagine 605.

Belongs to the glycosyltransferase 2 family. GalNAc-T subfamily. Mn(2+) serves as cofactor.

Its subcellular location is the golgi apparatus membrane. It functions in the pathway protein modification; protein glycosylation. Functionally, probable glycopeptide transferase involved in O-linked oligosaccharide biosynthesis. Glycopeptide transferases catalyze the transfer of an N-acetyl-D-galactosamine residue to an already glycosylated peptide. In contrast to other members of the family, it does not act as a peptide transferase that transfers GalNAc onto serine or threonine residue on peptides that have been tested. Some peptide transferase activity is however not excluded, considering that its appropriate peptide substrate may remain unidentified. This Caenorhabditis elegans protein is Probable N-acetylgalactosaminyltransferase 6 (gly-6).